The following is a 127-amino-acid chain: Small ribosomal subunit protein uS11 (127 aa).

The protein belongs to the universal ribosomal protein uS11 family. Part of the 30S ribosomal subunit. Interacts with proteins S7 and S18. Binds to IF-3.

Functionally, located on the platform of the 30S subunit, it bridges several disparate RNA helices of the 16S rRNA. Forms part of the Shine-Dalgarno cleft in the 70S ribosome. This Rickettsia rickettsii (strain Iowa) protein is Small ribosomal subunit protein uS11.